A 282-amino-acid polypeptide reads, in one-letter code: MALLSFERKYRVPGGTLIGGSLFDFWVGPFYVGFFGVTTIFFATLGFLLILWGAAMQGTWNPQLISIFPPPVENGLNVAALDKGGLWQVITVCATGAFCSWALREVEICRKLGIGFHIPVAFSMAIFAYLTLVVIRPMMMGSWGYAFPYGIWTHLDWVSNTGYTYGNFHYNPFHMLGISLFFTTAWALAMHGALVLSAANPVKGKTMRTPDHEDTYFRDLMGYSVGTLGIHRLGLLLALNAVFWSACCMLVSGTIYFDLWSDWWYWWVNMPFWADMAGGING.

The next 3 helical transmembrane spans lie at 33–56, 85–113, and 116–141; these read GFFG…GAAM, GLWQ…RKLG, and FHIP…MMMG. (7R,8Z)-bacteriochlorophyll b is bound by residues His-154 and His-174. A helical transmembrane segment spans residues 171–200; it reads NPFHMLGISLFFTTAWALAMHGALVLSAAN. His-191 lines the Fe cation pocket. Position 217 (Phe-217) interacts with a ubiquinone. The helical transmembrane segment at 226–252 threads the bilayer; the sequence is GTLGIHRLGLLLALNAVFWSACCMLVS. His-231 is a binding site for Fe cation.

The protein belongs to the reaction center PufL/M/PsbA/D family. In terms of assembly, reaction center is composed of four bacteriochlorophylls, two bacteriopheophytins, two ubiquinones, one iron, and three highly hydrophobic polypeptide chains (designated L, M, and H).

Its subcellular location is the cellular chromatophore membrane. Its function is as follows. The reaction center is a membrane-bound complex that mediates the initial photochemical event in the electron transfer process of photosynthesis. The polypeptide is Reaction center protein L chain (pufL) (Rhodobacter capsulatus (Rhodopseudomonas capsulata)).